A 559-amino-acid chain; its full sequence is Glucose-6-phosphate isomerase (559 aa).

Catalysis depends on E352, which acts as the Proton donor. Catalysis depends on residues H383 and K511.

Belongs to the GPI family.

Its subcellular location is the cytoplasm. The enzyme catalyses alpha-D-glucose 6-phosphate = beta-D-fructose 6-phosphate. Its pathway is carbohydrate biosynthesis; gluconeogenesis. It participates in carbohydrate degradation; glycolysis; D-glyceraldehyde 3-phosphate and glycerone phosphate from D-glucose: step 2/4. Catalyzes the reversible isomerization of glucose-6-phosphate to fructose-6-phosphate. This is Glucose-6-phosphate isomerase from Chlorobium phaeobacteroides (strain DSM 266 / SMG 266 / 2430).